Reading from the N-terminus, the 269-residue chain is Tryptophan synthase alpha chain (269 aa).

Catalysis depends on proton acceptor residues Glu49 and Asp60.

It belongs to the TrpA family. In terms of assembly, tetramer of two alpha and two beta chains.

It catalyses the reaction (1S,2R)-1-C-(indol-3-yl)glycerol 3-phosphate + L-serine = D-glyceraldehyde 3-phosphate + L-tryptophan + H2O. It participates in amino-acid biosynthesis; L-tryptophan biosynthesis; L-tryptophan from chorismate: step 5/5. Its function is as follows. The alpha subunit is responsible for the aldol cleavage of indoleglycerol phosphate to indole and glyceraldehyde 3-phosphate. In Histophilus somni (strain 2336) (Haemophilus somnus), this protein is Tryptophan synthase alpha chain.